The sequence spans 210 residues: Somatotropin-1 (210 aa).

The signal sequence occupies residues 1–22 (MGQVFLLMPVLLASCFLSQGAA). Position 38 (histidine 38) interacts with Zn(2+). Cysteine 71 and cysteine 183 are joined by a disulfide. Glutamate 192 contributes to the Zn(2+) binding site. The cysteines at positions 200 and 208 are disulfide-linked.

Belongs to the somatotropin/prolactin family.

The protein localises to the secreted. Growth hormone plays an important role in growth control and is involved in the regulation of several anabolic processes. Implicated as an osmoregulatory substance important for seawater adaptation. The sequence is that of Somatotropin-1 (gh1) from Oncorhynchus nerka (Sockeye salmon).